The chain runs to 32 residues: Calcitonin (32 aa).

A disulfide bridge connects residues C1 and C7. Position 32 is a proline amide (P32).

This sequence belongs to the calcitonin family.

It is found in the secreted. Its function is as follows. Causes a rapid but short-lived drop in the level of calcium and phosphate in blood by promoting the incorporation of those ions in the bones. The protein is Calcitonin of Aquarana catesbeiana (American bullfrog).